Reading from the N-terminus, the 344-residue chain is L-threonine 3-dehydrogenase (344 aa).

Cys-42 contributes to the Zn(2+) binding site. Catalysis depends on charge relay system residues Thr-44 and His-47. Zn(2+) is bound by residues His-67, Glu-68, Cys-97, Cys-100, Cys-103, and Cys-111. Residues Ile-179, Asp-199, Arg-204, 266 to 268, and 290 to 291 each bind NAD(+); these read LGI and IY.

The protein belongs to the zinc-containing alcohol dehydrogenase family. As to quaternary structure, homotetramer. Requires Zn(2+) as cofactor.

The protein localises to the cytoplasm. The enzyme catalyses L-threonine + NAD(+) = (2S)-2-amino-3-oxobutanoate + NADH + H(+). The protein operates within amino-acid degradation; L-threonine degradation via oxydo-reductase pathway; glycine from L-threonine: step 1/2. Functionally, catalyzes the NAD(+)-dependent oxidation of L-threonine to 2-amino-3-ketobutyrate. The protein is L-threonine 3-dehydrogenase of Sinorhizobium medicae (strain WSM419) (Ensifer medicae).